We begin with the raw amino-acid sequence, 1819 residues long: U3 small nucleolar RNA-associated protein 10 (1819 aa).

The stretch at Leu-1779–Tyr-1817 is one HEAT repeat.

Belongs to the HEATR1/UTP10 family. As to quaternary structure, component of the ribosomal small subunit (SSU) processome.

It localises to the nucleus. Its subcellular location is the nucleolus. In terms of biological role, involved in nucleolar processing of pre-18S ribosomal RNA. Involved in ribosome biosynthesis. The sequence is that of U3 small nucleolar RNA-associated protein 10 from Meyerozyma guilliermondii (strain ATCC 6260 / CBS 566 / DSM 6381 / JCM 1539 / NBRC 10279 / NRRL Y-324) (Yeast).